Consider the following 149-residue polypeptide: Oocyte-expressed protein (149 aa).

The KH; atypical domain maps to 49–110 (PLVFYLEAWL…RVQNRVKSVL (62 aa)).

Belongs to the KHDC1 family. As to quaternary structure, component of the subcortical maternal complex (SCMC), at least composed of NLRP5, KHDC3, OOEP, and TLE6. Within the complex, interacts with NLRP5, KHDC3 and TLE6. As part of the SCMC interacts with the SCMC-associated protein NLRP4F. The SCMC may facilitate translocation of its components between the nuclear and cytoplasmic compartments. Forms a scaffold complex with KHDC3/FILIA, and interacts with BLM and TRIM25 at DNA replication forks.

The protein localises to the cytoplasm. It localises to the nucleus. Component of the subcortical maternal complex (SCMC), a multiprotein complex that plays a key role in early embryonic development. The SCMC complex is a structural constituent of cytoplasmic lattices, which consist in fibrous structures found in the cytoplasm of oocytes and preimplantation embryos. They are required to store maternal proteins critical for embryonic development, such as proteins that control epigenetic reprogramming of the preimplantation embryo, and prevent their degradation or activation. As part of the OOEP-KHDC3 scaffold, recruits BLM and TRIM25 to DNA replication forks, thereby promoting the ubiquitination of BLM by TRIM25, enhancing BLM retainment at replication forks and therefore promoting stalled replication fork restart. Positively regulates the homologous recombination-mediated DNA double-strand break (DSB) repair pathway by regulating ATM activation and RAD51 recruitment to DSBs in oocytes. Thereby contributes to oocyte survival and the resumption and completion of meiosis. The sequence is that of Oocyte-expressed protein (OOEP) from Canis lupus familiaris (Dog).